The sequence spans 839 residues: Taste receptor type 1 member 2 (839 aa).

The signal sequence occupies residues 1–19; it reads MGPRATTICSLFFLLWVLA. The Extracellular portion of the chain corresponds to 20–566; the sequence is EPAENSDFYL…AFLEWHEAPT (547 aa). Residues Asn-84, Asn-248, Asn-292, Asn-312, Asn-368, Asn-428, Asn-487, and Asn-527 are each glycosylated (N-linked (GlcNAc...) asparagine). A helical transmembrane segment spans residues 567 to 587; sequence IAVALLAALGFLSTLAILVIF. Residues 588 to 602 lie on the Cytoplasmic side of the membrane; sequence WRHFQTPMVRSAGGP. Residues 603–623 form a helical membrane-spanning segment; the sequence is MCFLMLTLLLVAYMVVPVYVG. Topologically, residues 624–635 are extracellular; the sequence is PPKVSTCLCRQA. Residues 636–656 form a helical membrane-spanning segment; sequence LFPLCFTICISCIAVRSFQII. The Cytoplasmic portion of the chain corresponds to 657 to 681; sequence CAFKMASRFPRAYSYWVRYQGPYVS. Residues 682–702 traverse the membrane as a helical segment; the sequence is MAFITVLKMVIVVIGMLATGL. Residues 703–727 lie on the Extracellular side of the membrane; the sequence is NPTTRTDPDDPKIMIVSCNPNYRNS. Residues 728-748 form a helical membrane-spanning segment; sequence LLFNTSLDLLLSVVGFSFANM. Residues 749–760 are Cytoplasmic-facing; it reads GKELPTNYNEAK. Residues 761 to 781 traverse the membrane as a helical segment; sequence FITLSMTFYFTSSISLCTFMS. Over 782–784 the chain is Extracellular; the sequence is AYS. The chain crosses the membrane as a helical span at residues 785–805; it reads GVLVTIVDLLVTVLNLLAISL. Topologically, residues 806-839 are cytoplasmic; sequence GYFGPKCYMILFYPERNTPAYFNSVIQGYTMTRD.

This sequence belongs to the G-protein coupled receptor 3 family. TAS1R subfamily. In terms of assembly, forms heterodimers with TAS1R3.

The protein resides in the cell membrane. In terms of biological role, putative taste receptor. TAS1R2/TAS1R3 recognizes diverse natural and synthetic sweeteners. In Pongo pygmaeus (Bornean orangutan), this protein is Taste receptor type 1 member 2 (TAS1R2).